The sequence spans 274 residues: Acetyl-coenzyme A carboxylase carboxyl transferase subunit alpha (274 aa).

In terms of domain architecture, CoA carboxyltransferase C-terminal spans asparagine 2–glutamate 250.

It belongs to the AccA family. As to quaternary structure, acetyl-CoA carboxylase is a heterohexamer composed of biotin carboxyl carrier protein (AccB), biotin carboxylase (AccC) and two subunits each of ACCase subunit alpha (AccA) and ACCase subunit beta (AccD).

The protein localises to the cytoplasm. It catalyses the reaction N(6)-carboxybiotinyl-L-lysyl-[protein] + acetyl-CoA = N(6)-biotinyl-L-lysyl-[protein] + malonyl-CoA. It participates in lipid metabolism; malonyl-CoA biosynthesis; malonyl-CoA from acetyl-CoA: step 1/1. Functionally, component of the acetyl coenzyme A carboxylase (ACC) complex. First, biotin carboxylase catalyzes the carboxylation of biotin on its carrier protein (BCCP) and then the CO(2) group is transferred by the carboxyltransferase to acetyl-CoA to form malonyl-CoA. The chain is Acetyl-coenzyme A carboxylase carboxyl transferase subunit alpha from Clostridium botulinum (strain Eklund 17B / Type B).